Here is a 576-residue protein sequence, read N- to C-terminus: RNA-binding post-transcriptional regulator cip2 (576 aa).

One can recognise an RRM domain in the interval 232–310 (TAIVIKNIPF…RRLRVEWKRQ (79 aa)). The R3H domain maps to 355-420 (DPAILNVYSH…AKQVVITMPS (66 aa)).

Interacts with csx1. Phosphorylated by sty1.

It is found in the cytoplasm. Regulates global gene expression after oxidative stress. Interacts and stabilizes mRNAs and may regulate their transition between different cytoplasmic components after oxidative stress. This chain is RNA-binding post-transcriptional regulator cip2 (cip2), found in Schizosaccharomyces pombe (strain 972 / ATCC 24843) (Fission yeast).